The chain runs to 361 residues: Zygote arrest protein 1 (361 aa).

3 disordered regions span residues 1-23, 98-128, and 148-252; these read MFPASTFHPCPHPYPQATKAGDG, QPAGCRASPDARSGSCQPRGHAGAGRSPRSW, and VAGG…EQDK. Threonine 154 bears the Phosphothreonine; by CDK1 mark. Serine 161 carries the post-translational modification Phosphoserine; by CDK1. Over residues 168 to 177 the composition is skewed to basic and acidic residues; sequence REPEPREVAA. The 3CxxC-type zinc-finger motif lies at 263–346; it reads KYGYYHCKDC…RQDLCGRCKD (84 aa).

This sequence belongs to the ZAR1 family. Interacts with YBX2. Post-translationally, phosphorylation by CDK1 does not regulate formation of MARDO (mitochondria-associated ribonucleoprotein domain) membraneless compartment. Ubiquitinated and degradaded by the proteasome during oocyte meiotic maturation, leading to MARDO (mitochondria-associated ribonucleoprotein domain) membraneless compartment dissolution. As to expression, ovary. Expressed in primary oocytes (from primary through antral follicle stages) and during the progression from Meiosis I to Meiosis II. The mRNA is detected in growing oocytes (early primary follicle, type 3a) through fully grown oocytes (antral follicle, type 8).

It is found in the cytoplasm. Its subcellular location is the cytoplasmic ribonucleoprotein granule. Functionally, mRNA-binding protein that mediates formation of MARDO (mitochondria-associated ribonucleoprotein domain), a membraneless compartment that stores maternal mRNAs in oocytes. MARDO assembly around mitochondria is directed by an increase in mitochondrial membrane potential during oocyte growth. Promotes formation of MARDO phase-separated membraneless compartment by undergoing liquid-liquid phase separation upon binding to maternal mRNAs. Binds to the 3'-UTR of maternal mRNAs. Maternal mRNAs stored in the MARDO are translationally repressed. Essential for female fertility and oocyte-to-embryo transition by coordinating maternal mRNA storage, translation and degradation. In Mus musculus (Mouse), this protein is Zygote arrest protein 1.